We begin with the raw amino-acid sequence, 383 residues long: Glutamyl-tRNA reductase (383 aa).

Substrate contacts are provided by residues 38-41 (TCNR), Ser82, 87-89 (EDQ), and Gln93. The active-site Nucleophile is Cys39. 161–166 (GAGEIA) contributes to the NADP(+) binding site.

It belongs to the glutamyl-tRNA reductase family. In terms of assembly, homodimer.

It catalyses the reaction (S)-4-amino-5-oxopentanoate + tRNA(Glu) + NADP(+) = L-glutamyl-tRNA(Glu) + NADPH + H(+). It participates in porphyrin-containing compound metabolism; protoporphyrin-IX biosynthesis; 5-aminolevulinate from L-glutamyl-tRNA(Glu): step 1/2. Its function is as follows. Catalyzes the NADPH-dependent reduction of glutamyl-tRNA(Glu) to glutamate 1-semialdehyde (GSA). In Methanococcus aeolicus (strain ATCC BAA-1280 / DSM 17508 / OCM 812 / Nankai-3), this protein is Glutamyl-tRNA reductase.